Here is a 146-residue protein sequence, read N- to C-terminus: DNA-binding protein Rv2175c (146 aa).

Residues 1–27 (MPGRAPGSTLARVGSIPAGDDVLDPDE) are disordered. Threonine 9 carries the phosphothreonine modification.

In terms of assembly, monomer in solution. May form homodimers. Interacts with phosphorylated PknL. Post-translationally, phosphorylated by PknL. Phosphorylation negatively regulates DNA-binding activity.

Binds DNA at low salt concentrations. The polypeptide is DNA-binding protein Rv2175c (Mycobacterium tuberculosis (strain ATCC 25618 / H37Rv)).